A 397-amino-acid polypeptide reads, in one-letter code: S-adenosylmethionine synthase (397 aa).

Residue His-17 coordinates ATP. Asp-19 is a binding site for Mg(2+). Glu-45 provides a ligand contact to K(+). Residues Glu-58 and Gln-101 each coordinate L-methionine. A flexible loop region spans residues 101 to 111 (QSPDIAQGVDK). ATP contacts are provided by residues 176–178 (DGK), 243–244 (RF), Asp-252, 258–259 (RK), and Lys-279. Asp-252 contacts L-methionine. Lys-283 provides a ligand contact to L-methionine.

This sequence belongs to the AdoMet synthase family. Homotetramer; dimer of dimers. Mg(2+) serves as cofactor. The cofactor is K(+).

The protein localises to the cytoplasm. It carries out the reaction L-methionine + ATP + H2O = S-adenosyl-L-methionine + phosphate + diphosphate. It functions in the pathway amino-acid biosynthesis; S-adenosyl-L-methionine biosynthesis; S-adenosyl-L-methionine from L-methionine: step 1/1. Catalyzes the formation of S-adenosylmethionine (AdoMet) from methionine and ATP. The overall synthetic reaction is composed of two sequential steps, AdoMet formation and the subsequent tripolyphosphate hydrolysis which occurs prior to release of AdoMet from the enzyme. The chain is S-adenosylmethionine synthase from Staphylococcus aureus (strain USA300).